Consider the following 668-residue polypeptide: MNEKLQSYEKQLTSDIVNNCDLIIEVNASSKTCQETLSSLLRELQLSHFSTAVRPGSDTSIFVFVKVQNDYLIELAHNDRTSSFLCGALDDLNHVNVNSVTDIDSSERIRLVYDKITGSKTEDSLGICPGENPYADIISIFPLHQPKFDIKWSKYWYQLLLGNKKQLDSINAEYGSQVALYFAFADFFKTGVFVLSFWGILGYYFLRPYSYIFAIGVALWGAFFIQFWRVQEHKLTNHWSTVNCQSLAKSMTEFKPQSYRVDSLLGTARPYYPQWEIIVRSTIANVPLFLISGCILLFLIAIAFIVDVTLSEVYSGPLKSIVSLLPAVVFQVLTLPFTFIYSIVAERLTKLENRRTKTDFQASLSGKMFLQNFMLSYTALFLISYIYGPFAEYFVPHYIQNRMSQSFFSVGYIAKSTFKLNPLRLRNQYIYFLTNAQVINYITILAVPQLISYVKKHYMSKPTRELHIQDIPSETVTLKRARSEAEKIEYDCYNDYKDFVLMFGFLVMFSPIYPLAPIFSLVNCVLYIRSSVYRFTKMVKKPVPCRVDSIAPWDQRLSLLSWLGCITMPSICYFYSSTTKPSDKSMVIAAVIGLLSEHLWFLLRMFISSVFPVDKTFFAPAKERQHLLAERSFSIPPVADVPTSTTTAFEEADETLSIYRTAENKKTK.

Helical transmembrane passes span 182-202 (FAFA…GILG), 208-228 (PYSY…IQFW), 286-306 (VPLF…AFIV), 321-341 (IVSL…TFIY), 379-399 (ALFL…PHYI), 430-450 (IYFL…VPQL), 499-519 (FVLM…APIF), 557-577 (LSLL…FYSS), and 587-607 (VIAA…RMFI).

It is found in the membrane. This is an uncharacterized protein from Schizosaccharomyces pombe (strain 972 / ATCC 24843) (Fission yeast).